A 453-amino-acid polypeptide reads, in one-letter code: Verruculogen prenyltransferase (453 aa).

Glu89 contacts substrate. Dimethylallyl diphosphate-binding residues include Arg102, Lys194, Tyr196, Lys273, Tyr275, Tyr378, Tyr443, and Tyr447.

Belongs to the tryptophan dimethylallyltransferase family.

The catalysed reaction is verruculogen + dimethylallyl diphosphate = fumitremorgin A + diphosphate. It participates in mycotoxin biosynthesis. Functionally, verruculogen prenyltransferase; part of the gene cluster that mediates the biosynthesis of fumitremorgins, indole alkaloids that carry not only intriguing chemical structures, but also interesting biological and pharmacological activities. The biosynthesis of fumitremorgin-type alkaloids begins by condensation of the two amino acids L-tryptophan and L-proline to brevianamide F, catalyzed by the non-ribosomal peptide synthetase ftmPS/ftmA. Brevianamide F is then prenylated by the prenyltransferase ftmPT1/ftmB in the presence of dimethylallyl diphosphate, resulting in the formation of tryprostatin B. The three cytochrome P450 monooxygenases, ftmP450-1/ftmC, ftmP450-2/ftmE and ftmP450-3/FtmG, are responsible for the conversion of tryprostatin B to 6-hydroxytryprostatin B, tryprostatin A to fumitremorgin C and fumitremorgin C to 12,13-dihydroxyfumitremorgin C, respectively. The putative methyltransferase ftmMT/ftmD is expected for the conversion of 6-hydroxytryprostatin B to tryprostatin A. FtmPT2/FtmH catalyzes the prenylation of 12,13-dihydroxyfumitre-morgin C in the presence of dimethylallyl diphosphate, resulting in the formation of fumitremorgin B. Fumitremorgin B is further converted to verruculogen by ftmOx1/ftmF via the insertion of an endoperoxide bond between the two prenyl moieties. Finally, verruculogen is further converted to fumitremorgin A by the verruculogen prenyltransferase ftmPT3. The polypeptide is Verruculogen prenyltransferase (Neosartorya fischeri (strain ATCC 1020 / DSM 3700 / CBS 544.65 / FGSC A1164 / JCM 1740 / NRRL 181 / WB 181) (Aspergillus fischerianus)).